Reading from the N-terminus, the 192-residue chain is NADH dehydrogenase [ubiquinone] iron-sulfur protein 3 (192 aa).

This sequence belongs to the complex I 30 kDa subunit family. Complex I is composed of about 45 different subunits. This is a component of the iron-sulfur (IP) fragment of the enzyme.

The protein localises to the mitochondrion inner membrane. The enzyme catalyses a ubiquinone + NADH + 5 H(+)(in) = a ubiquinol + NAD(+) + 4 H(+)(out). Its function is as follows. Core subunit of the mitochondrial membrane respiratory chain NADH dehydrogenase (Complex I) that is believed to belong to the minimal assembly required for catalysis. Complex I functions in the transfer of electrons from NADH to the respiratory chain. The immediate electron acceptor for the enzyme is believed to be ubiquinone. The sequence is that of NADH dehydrogenase [ubiquinone] iron-sulfur protein 3 (NAD9) from Beta vulgaris (Sugar beet).